We begin with the raw amino-acid sequence, 535 residues long: MASNDEGMAPSLGSPWASQTGPWDAILKAVKDQLPSLDSDSSLSDYGEEELSIFQRNQTALIPDLSEELAEDPADGDKSRTWAAAAEESLPEVCGTQKSVRLCVCNPALVPAELATEPGNRRNTRTKDASSQEGRDPGRPVETSGEVSAFLGMAEETPRWLGSDLGSLSFNTKGSQGPPWDPQAKASLSRHEGDPKAEPASQESVNRRALRQERRKMIEKDILQKVTRDACGPASSDQGGVKEAPCHAVESAARSKMPLAEPPEGPPVLSLQQLEAWDLDYILQSLAGQEDNQGNRGPGTVWWAADRRQVQDRTVPSADDRLMEQLALLCTMQSRASACAWKVPADTPQDTEEAGAGSRCSSRKPGSEAGPGPQLAQGMRLNTEPPTIFIDLRQTVPPDHLSPARSRGSSHSSSDSEEEEEEVEMAALGDAEGASPSSLGLRSCTGKSQLLQQLRAFRKGIAQPKLPANKGPGGERAQAPEDTAASGTVRKQHMKLCAKGQSAQARLPRGRPRALGDAPEPGAAREALMPPLDQL.

Disordered regions lie at residues 112–215 (AELA…QERR), 228–267 (RDAC…EGPP), 344–380 (PADT…QGMR), 395–444 (TVPP…LRSC), and 461–535 (IAQP…LDQL). Over residues 125–139 (RTKDASSQEGRDPGR) the composition is skewed to basic and acidic residues. Polar residues predominate over residues 166–175 (GSLSFNTKGS). A Phosphoserine modification is found at Ser-175. The residue at position 362 (Ser-362) is a Phosphoserine. A compositionally biased stretch (acidic residues) spans 415 to 424 (DSEEEEEEVE). Positions 435-444 (SPSSLGLRSC) are enriched in polar residues.

The protein resides in the dynein axonemal particle. Its subcellular location is the cytoplasm. In terms of biological role, in cyliated cells, dynein axonemal particle-specific protein required for deployment of ODA to the axoneme. Interacts with outer dynein arm (ODA) subunits. This chain is Dynein axonemal assembly factor 8 (DNAAF8), found in Macaca fascicularis (Crab-eating macaque).